The sequence spans 425 residues: Bifunctional phosphoribosylaminoimidazole carboxylase/phosphoribosylaminoimidazole succinocarboxamide synthetase (425 aa).

At Ala-2 the chain carries N-acetylalanine. Positions Ala-2–Leu-260 are SAICAR synthetase domain. Tyr-22 carries the phosphotyrosine modification. Position 27 is a phosphoserine (Ser-27). Residue Lys-36 is modified to N6-acetyllysine. The residue at position 107 (Ser-107) is a Phosphoserine. Position 238 is a phosphothreonine (Thr-238). Lys-247 is subject to N6-acetyllysine. The tract at residues Lys-261 to Cys-266 is linker. Residues Arg-267–Leu-425 are AIR carboxylase domain. Position 274 is a phosphoserine (Ser-274). Residue Ser-332 participates in CO2 binding.

It in the N-terminal section; belongs to the SAICAR synthetase family. This sequence in the C-terminal section; belongs to the AIR carboxylase family. Class II subfamily. As to quaternary structure, homooctamer.

The enzyme catalyses 5-amino-1-(5-phospho-D-ribosyl)imidazole-4-carboxylate + L-aspartate + ATP = (2S)-2-[5-amino-1-(5-phospho-beta-D-ribosyl)imidazole-4-carboxamido]succinate + ADP + phosphate + 2 H(+). The catalysed reaction is 5-amino-1-(5-phospho-D-ribosyl)imidazole-4-carboxylate + H(+) = 5-amino-1-(5-phospho-beta-D-ribosyl)imidazole + CO2. The protein operates within purine metabolism; IMP biosynthesis via de novo pathway; 5-amino-1-(5-phospho-D-ribosyl)imidazole-4-carboxamide from 5-amino-1-(5-phospho-D-ribosyl)imidazole-4-carboxylate: step 1/2. Its pathway is purine metabolism; IMP biosynthesis via de novo pathway; 5-amino-1-(5-phospho-D-ribosyl)imidazole-4-carboxylate from 5-amino-1-(5-phospho-D-ribosyl)imidazole (carboxylase route): step 1/1. In terms of biological role, bifunctional phosphoribosylaminoimidazole carboxylase and phosphoribosylaminoimidazole succinocarboxamide synthetase catalyzing two reactions of the de novo purine biosynthetic pathway. The polypeptide is Bifunctional phosphoribosylaminoimidazole carboxylase/phosphoribosylaminoimidazole succinocarboxamide synthetase (Homo sapiens (Human)).